Consider the following 694-residue polypeptide: Polyribonucleotide nucleotidyltransferase (694 aa).

Residues D485 and D491 each coordinate Mg(2+). The region spanning 552-611 (PRIETMQIKPNKIATVIGPGGKQIRQIIEEAGVQIDINDSGLVSISASSPQAIEKAKSMI) is the KH domain. The 69-residue stretch at 621 to 689 (GKIYEGRVTS…EKGQYKLSHK (69 aa)) folds into the S1 motif domain.

The protein belongs to the polyribonucleotide nucleotidyltransferase family. The cofactor is Mg(2+).

The protein localises to the cytoplasm. The catalysed reaction is RNA(n+1) + phosphate = RNA(n) + a ribonucleoside 5'-diphosphate. Involved in mRNA degradation. Catalyzes the phosphorolysis of single-stranded polyribonucleotides processively in the 3'- to 5'-direction. The sequence is that of Polyribonucleotide nucleotidyltransferase from Chlamydia caviae (strain ATCC VR-813 / DSM 19441 / 03DC25 / GPIC) (Chlamydophila caviae).